Reading from the N-terminus, the 354-residue chain is N-acylethanolamine-hydrolyzing acid amidase (354 aa).

Positions 1 to 22 (MRSPGIVLLLLLLLLLPPGAAP) are cleaved as a signal peptide. N-linked (GlcNAc...) asparagine glycosylation is found at N35 and N104. Catalysis depends on C123, which acts as the Nucleophile. N306, N312, and N352 each carry an N-linked (GlcNAc...) asparagine glycan.

Belongs to the acid ceramidase family. In terms of assembly, heterodimer of an alpha and a beta subunit, produced by autocatalytic cleavage. In terms of processing, N-glycosylated. Tunicamycin treatment causes a reduction in specific activity against N-palmitoylethanolamine. Post-translationally, autoproteolytic cleavage at pH 4.5 gives rise to the alpha and beta subunit. Cleavage gives rise to a conformation change that activates the enzyme. The same catalytic Cys residue mediates the autoproteolytic cleavage and subsequent hydrolysis of lipid substrates.

It is found in the lysosome. Its subcellular location is the membrane. It catalyses the reaction N-hexadecanoylethanolamine + H2O = ethanolamine + hexadecanoate. It carries out the reaction an N-(long-chain fatty acyl)ethanolamine + H2O = a long-chain fatty acid + ethanolamine. The catalysed reaction is N-dodecanoylethanolamine + H2O = dodecanoate + ethanolamine. The enzyme catalyses N-tetradecanoylethanolamine + H2O = tetradecanoate + ethanolamine. It catalyses the reaction an N-acylsphing-4-enine + H2O = sphing-4-enine + a fatty acid. It carries out the reaction N-hexadecanoylsphing-4-enine + H2O = sphing-4-enine + hexadecanoate. The catalysed reaction is N-dodecanoylsphing-4-enine + H2O = dodecanoate + sphing-4-enine. Its pathway is lipid metabolism; fatty acid metabolism. In terms of biological role, degrades bioactive fatty acid amides to their corresponding acids, with the following preference: N-palmitoylethanolamine &gt; N-myristoylethanolamine &gt; N-stearoylethanolamine &gt; N-oleoylethanolamine &gt; N-linoleoylethanolamine &gt; N-arachidonoylethanolamine. The sequence is that of N-acylethanolamine-hydrolyzing acid amidase from Cavia porcellus (Guinea pig).